We begin with the raw amino-acid sequence, 166 residues long: Orotate phosphoribosyltransferase (166 aa).

5-phospho-alpha-D-ribose 1-diphosphate is bound by residues arginine 83, lysine 84, arginine 86, histidine 88, and 108-116 (EDVVTTGNS). Threonine 112 and arginine 140 together coordinate orotate.

This sequence belongs to the purine/pyrimidine phosphoribosyltransferase family. PyrE subfamily. As to quaternary structure, homodimer. The cofactor is Mg(2+).

The catalysed reaction is orotidine 5'-phosphate + diphosphate = orotate + 5-phospho-alpha-D-ribose 1-diphosphate. It functions in the pathway pyrimidine metabolism; UMP biosynthesis via de novo pathway; UMP from orotate: step 1/2. In terms of biological role, catalyzes the transfer of a ribosyl phosphate group from 5-phosphoribose 1-diphosphate to orotate, leading to the formation of orotidine monophosphate (OMP). The polypeptide is Orotate phosphoribosyltransferase (Thermoplasma volcanium (strain ATCC 51530 / DSM 4299 / JCM 9571 / NBRC 15438 / GSS1)).